The following is a 159-amino-acid chain: Nutritionally-regulated adipose and cardiac-enriched protein homolog (159 aa).

The segment at 1 to 67 (MKTAVHALSP…GDEPRRTTRH (67 aa)) is disordered. 2 stretches are compositionally biased toward basic and acidic residues: residues 12-25 (SRPETQHQTRKNEE) and 50-63 (SPQERCGRGDEPRR). A helical transmembrane segment spans residues 107–124 (LTACILLALALGMCCGQA).

It localises to the cell membrane. The protein is Nutritionally-regulated adipose and cardiac-enriched protein homolog (NRAC) of Bos taurus (Bovine).